Here is a 285-residue protein sequence, read N- to C-terminus: Tropomyosin (285 aa).

A coiled-coil region spans residues 1-273 (MDAIKKKMQA…KEKYREIGDD (273 aa)).

This sequence belongs to the tropomyosin family. Homodimer.

Functionally, tropomyosin, in association with the troponin complex, plays a central role in the calcium dependent regulation of muscle contraction. This Chironomus kiiensis (Midge) protein is Tropomyosin.